Consider the following 456-residue polypeptide: Kynurenine 3-monooxygenase (456 aa).

It belongs to the aromatic-ring hydroxylase family. KMO subfamily. FAD is required as a cofactor.

The protein localises to the mitochondrion outer membrane. The catalysed reaction is L-kynurenine + NADPH + O2 + H(+) = 3-hydroxy-L-kynurenine + NADP(+) + H2O. The protein operates within cofactor biosynthesis; NAD(+) biosynthesis; quinolinate from L-kynurenine: step 1/3. In terms of biological role, catalyzes the hydroxylation of L-kynurenine (L-Kyn) to form 3-hydroxy-L-kynurenine (L-3OHKyn). Required for synthesis of quinolinic acid. In Candida albicans (strain SC5314 / ATCC MYA-2876) (Yeast), this protein is Kynurenine 3-monooxygenase.